We begin with the raw amino-acid sequence, 2742 residues long: Neurobeachin-like protein 2 (2742 aa).

Disordered stretches follow at residues 1312–1333 and 1356–1434; these read ALSP…PSES and LERA…QQTP. The span at 1384–1394 shows a compositional bias: pro residues; it reads TPSPLDGPRPF. Polar residues predominate over residues 1421–1433; the sequence is GDDTSNTSNPQQT. Phosphothreonine is present on Thr1855. Residues 1903-2028 enclose the BEACH-type PH domain; it reads EKREKLVLSA…LRNQVYSLLL (126 aa). The BEACH domain occupies 2041-2333; sequence RSPLEMLRAS…QLLKEPHPPR (293 aa). WD repeat units follow at residues 2374–2412, 2436–2479, 2482–2519, 2532–2570, 2577–2619, 2627–2662, and 2670–2705; these read LVLA…TWLP, KLLS…SLPR, LLNQ…VWRL, KPVQ…IHTV, AALR…TYSL, RLRA…ILHL, and PPLP…VGAG. Phosphoserine occurs at positions 2727 and 2730.

This sequence belongs to the WD repeat neurobeachin family.

The protein resides in the endoplasmic reticulum. Its function is as follows. Probably involved in thrombopoiesis. Plays a role in the development or secretion of alpha-granules, that contain several growth factors important for platelet biogenesis. The polypeptide is Neurobeachin-like protein 2 (Nbeal2) (Mus musculus (Mouse)).